The primary structure comprises 163 residues: Jun dimerization protein 2 (163 aa).

2 disordered regions span residues Met1–Gly20 and Lys59–Cys89. A Glycyl lysine isopeptide (Lys-Gly) (interchain with G-Cter in SUMO2) cross-link involves residue Lys65. The 64-residue stretch at Glu72–His135 folds into the bZIP domain. The interval Arg74–Arg96 is basic motif. The interval Leu100–Leu128 is leucine-zipper. Thr148 carries the post-translational modification Phosphothreonine; by MAPK8.

This sequence belongs to the bZIP family. ATF subfamily. Forms a homodimer or heterodimer with JUN, JUNB, JUND, CEBPG and ATF2 thereby inhibiting transactivation by JUN, ATF2 and CEBPG. Binds multiple DNA elements such as cAMP-response element (CRE) and TPA response element (TRE) either as homodimer or heterodimer. Interacts with IRF2BP1. Phosphorylation of Thr-148 by MAPK8 in response to different stress conditions such as, UV irradiation, oxidatives stress and anisomycin treatments. In terms of processing, polyubiquitinated; probably by IRF2BP1. As to expression, ubiquitously expressed in all adult tissues tested as well in embryos.

The protein localises to the nucleus. In terms of biological role, component of the AP-1 transcription factor that represses transactivation mediated by the Jun family of proteins. Involved in a variety of transcriptional responses associated with AP-1, such as UV-induced apoptosis, cell differentiation, tumorigenesis and antitumogeneris. Can also function as a repressor by recruiting histone deacetylase 3/HDAC3 to the promoter region of JUN. May control transcription via direct regulation of the modification of histones and the assembly of chromatin. The chain is Jun dimerization protein 2 (Jdp2) from Mus musculus (Mouse).